A 517-amino-acid polypeptide reads, in one-letter code: MFS efflux transporter inpD (517 aa).

The interval Met-1–Glu-24 is disordered. Helical transmembrane passes span Leu-37–Leu-57, Asp-59–Gly-79, Ile-89–Pro-109, Ile-112–Ala-132, and Ile-151–Ile-171. Asn-172 is a glycosylation site (N-linked (GlcNAc...) asparagine). 9 helical membrane-spanning segments follow: residues Trp-178–Leu-198, Leu-219–Gly-239, Asn-247–Val-267, Phe-292–Leu-312, Leu-328–Ile-348, Val-352–Leu-372, Val-381–Val-401, Ile-412–Ser-432, and Ala-485–Leu-505.

Belongs to the major facilitator superfamily.

Its subcellular location is the cell membrane. Its function is as follows. MFS efflux transporter; part of the inp gene cluster that mediates the biosynthesis of fellutamide B, a mycotoxin that acts as a proteasome inhibitor. In the first step of fellutabmide B biosynthesis inpC activates 3-hydroxydodecanoic acid to generate 3-hydroxydodecanoyl-AMP that is then loaded onto the T0 domain of inpB. The 3-hydroxydodecanoyl-S-phosphopantetheinyl-T0 is sequentially extended with L-Asn and L-Gln by the two CAT modules of inpB. The linear lipodipeptide from inpB is then transferred onto inpA for the addition of the third amino acid, L-Leu. Reductive releasing of the lipotripeptide by the TE domain of inpA produces (2S)-fellutamide B. InpF might be involved in the release and transfer of the lipodipeptide from inpB to inpA. The inp cluster-encoded proteasome subunit inpE confers resistance to internally produced fellutamides. The MFS efflux transporter inpD may contribute to fellutamide resistance as well. This is MFS efflux transporter inpD from Emericella nidulans (strain FGSC A4 / ATCC 38163 / CBS 112.46 / NRRL 194 / M139) (Aspergillus nidulans).